The primary structure comprises 302 residues: Ribosomal RNA small subunit methyltransferase H (302 aa).

S-adenosyl-L-methionine is bound by residues 36-38 (GGH), D56, F84, D99, and Q106.

It belongs to the methyltransferase superfamily. RsmH family.

It localises to the cytoplasm. The catalysed reaction is cytidine(1402) in 16S rRNA + S-adenosyl-L-methionine = N(4)-methylcytidine(1402) in 16S rRNA + S-adenosyl-L-homocysteine + H(+). Functionally, specifically methylates the N4 position of cytidine in position 1402 (C1402) of 16S rRNA. The chain is Ribosomal RNA small subunit methyltransferase H from Christiangramia forsetii (strain DSM 17595 / CGMCC 1.15422 / KT0803) (Gramella forsetii).